Reading from the N-terminus, the 246-residue chain is MAVQPAQTAYDRAITVFSPDGRLFQVEYAREAVKRGTTALGIKVEEGVVLGVDKRVTSKLIEPESIEKVYQIDTHIGAATAGLVADARVLVERARIEAQTYRYTYGEPIDVDVLVKAICDLKQVYTQHGGVRPFGTALLIAGVDTKGCRLFETDPSGALTEHKATAIGEGRQEALDVFEEEYREDMTLQEAIELAVRALYEASREETTADNLEIAVVDKQGFRKLERKKIEEMFERVVGSEEDEGE.

This sequence belongs to the peptidase T1A family. The 20S proteasome core is composed of 14 alpha and 14 beta subunits that assemble into four stacked heptameric rings, resulting in a barrel-shaped structure. The two inner rings, each composed of seven catalytic beta subunits, are sandwiched by two outer rings, each composed of seven alpha subunits. The catalytic chamber with the active sites is on the inside of the barrel. Has a gated structure, the ends of the cylinder being occluded by the N-termini of the alpha-subunits. Is capped at one or both ends by the proteasome regulatory ATPase, PAN.

It is found in the cytoplasm. Its activity is regulated as follows. The formation of the proteasomal ATPase PAN-20S proteasome complex, via the docking of the C-termini of PAN into the intersubunit pockets in the alpha-rings, triggers opening of the gate for substrate entry. Interconversion between the open-gate and close-gate conformations leads to a dynamic regulation of the 20S proteasome proteolysis activity. Its function is as follows. Component of the proteasome core, a large protease complex with broad specificity involved in protein degradation. This is Proteasome subunit alpha from Methanopyrus kandleri (strain AV19 / DSM 6324 / JCM 9639 / NBRC 100938).